A 239-amino-acid chain; its full sequence is Ribosomal RNA small subunit methyltransferase G (239 aa).

S-adenosyl-L-methionine contacts are provided by residues Gly77, Phe82, 128–129 (AE), and Arg147. The disordered stretch occupies residues 219–239 (RKTPKKYPRKPGTPNKLPIEK).

It belongs to the methyltransferase superfamily. RNA methyltransferase RsmG family.

It localises to the cytoplasm. Specifically methylates the N7 position of guanine in position 535 of 16S rRNA. This is Ribosomal RNA small subunit methyltransferase G from Bacillus cytotoxicus (strain DSM 22905 / CIP 110041 / 391-98 / NVH 391-98).